The chain runs to 270 residues: Type II restriction enzyme CeqI (270 aa).

It carries out the reaction Endonucleolytic cleavage of DNA to give specific double-stranded fragments with terminal 5'-phosphates.. In terms of biological role, a P subtype restriction enzyme that recognizes the double-stranded sequence 5'-GATATC-3' and cleaves after T-3. The protein is Type II restriction enzyme CeqI (ceqIR) of Rhodococcus hoagii (Corynebacterium equii).